The chain runs to 89 residues: FMRFamide-like neuropeptides 19 (89 aa).

The N-terminal stretch at 1-20 (MSFQLTLFSMLFLLIAVVVG) is a signal peptide. Positions 21-67 (QPIQSQNGDLKMQAVQDNSPLNMEAFNDDSALYDYLEQSDPSLKSME) are excised as a propeptide. F76 is subject to Phenylalanine amide. Residues 80-89 (ASWASSVRFG) constitute a propeptide that is removed on maturation.

It belongs to the FARP (FMRFamide related peptide) family. As to expression, each flp gene is expressed in a distinct set of neurons. Flp-19 is expressed in the URX interneurons, the serotonin and acetylcholine-expressing HSN neurons, and the AIN, AWA and BAG neurons.

It localises to the secreted. In terms of biological role, FMRFamides and FMRFamide-like peptides are neuropeptides. WANQVRF-amide inhibits the activity of dissected pharyngeal myogenic muscle system. The chain is FMRFamide-like neuropeptides 19 from Caenorhabditis elegans.